Reading from the N-terminus, the 884-residue chain is Telomerase reverse transcriptase (884 aa).

The Reverse transcriptase domain maps to 422 to 725 (CRNHNSYTLS…TVIQFCAMHI (304 aa)). Aspartate 530, aspartate 670, and aspartate 671 together coordinate Mg(2+).

It belongs to the reverse transcriptase family. Telomerase subfamily. In terms of assembly, catalytic subunit of the telomerase holoenzyme complex composed minimally of EST2 and the telomerase RNA template component.

Its subcellular location is the nucleus. It localises to the chromosome. The protein resides in the telomere. The enzyme catalyses DNA(n) + a 2'-deoxyribonucleoside 5'-triphosphate = DNA(n+1) + diphosphate. Functionally, telomerase is a ribonucleoprotein enzyme essential for the replication of chromosome termini in most eukaryotes. It elongates telomeres. It is a reverse transcriptase that adds simple sequence repeats to chromosome ends by copying a template sequence within the RNA component of the enzyme. This chain is Telomerase reverse transcriptase (EST2), found in Saccharomyces cerevisiae (strain ATCC 204508 / S288c) (Baker's yeast).